The following is a 339-amino-acid chain: Silicatein (339 aa).

The signal sequence occupies residues 1 to 18 (MAIVYGAILFQIILIACA). Residues 19-122 (EFPPEWHAWK…REYQAPATVS (104 aa)) constitute a propeptide that is removed on maturation. Leu123 is modified (n,N-dimethylleucine; alternate). Leu123 is subject to N-methylleucine; alternate. Residue Ser188 is modified to Phosphoserine. Tyr219 is modified (phosphotyrosine). Active-site residues include His286 and Asn306. Position 335 is a phosphoserine (Ser335).

Belongs to the peptidase C1 family. As to quaternary structure, homodimer. Homodimerization occurs as a result of non-covalent interactions and not through disulfide linkages between the two monomers.

In terms of biological role, polymerizes silica around the axial filament during spicule formation. The protein is Silicatein of Petrosia ficiformis (Common Mediterranean sponge).